The following is a 314-amino-acid chain: uncharacterized protein (314 aa).

2 helical membrane-spanning segments follow: residues 23–43 and 98–118; these read LALG…MALF and MASG…GPLT. Over residues 165–184 the composition is skewed to gly residues; it reads GLGSGAGGGDVGGGGAGGTT. The segment at 165–314 is disordered; it reads GLGSGAGGGD…APDEKTDAGE (150 aa). Positions 190–202 are enriched in pro residues; that stretch reads GPPPVPTSSPPTT. 2 stretches are compositionally biased toward low complexity: residues 203-212 and 219-232; these read PAGAPTKSAT and ASPA…AGMP. The chain crosses the membrane as a helical span at residues 221–241; sequence PASAHMGAAGMPMVPPGAMGA. Basic and acidic residues predominate over residues 294–314; it reads LLPEHKDFGRIAPDEKTDAGE.

It is found in the cell membrane. This is an uncharacterized protein from Mycobacterium tuberculosis (strain ATCC 25618 / H37Rv).